A 295-amino-acid polypeptide reads, in one-letter code: Tyrosine recombinase XerD (295 aa).

In terms of domain architecture, Core-binding (CB) spans 1-85 (MNTIIEEYLN…TIRSFHQFAL (85 aa)). One can recognise a Tyr recombinase domain in the interval 106–289 (KLPDVLEIDE…SKSQIRKMYT (184 aa)). Active-site residues include Arg-146, Lys-170, His-241, Arg-244, and His-267. Tyr-276 acts as the O-(3'-phospho-DNA)-tyrosine intermediate in catalysis.

Belongs to the 'phage' integrase family. XerD subfamily. As to quaternary structure, forms a cyclic heterotetrameric complex composed of two molecules of XerC and two molecules of XerD.

The protein resides in the cytoplasm. Site-specific tyrosine recombinase, which acts by catalyzing the cutting and rejoining of the recombining DNA molecules. The XerC-XerD complex is essential to convert dimers of the bacterial chromosome into monomers to permit their segregation at cell division. It also contributes to the segregational stability of plasmids. This Staphylococcus epidermidis (strain ATCC 12228 / FDA PCI 1200) protein is Tyrosine recombinase XerD.